The primary structure comprises 264 residues: Hydroxyethylthiazole kinase (264 aa).

M43 is a binding site for substrate. ATP-binding residues include K119 and S165. Residue G192 participates in substrate binding.

The protein belongs to the Thz kinase family. Mg(2+) is required as a cofactor.

The catalysed reaction is 5-(2-hydroxyethyl)-4-methylthiazole + ATP = 4-methyl-5-(2-phosphooxyethyl)-thiazole + ADP + H(+). It participates in cofactor biosynthesis; thiamine diphosphate biosynthesis; 4-methyl-5-(2-phosphoethyl)-thiazole from 5-(2-hydroxyethyl)-4-methylthiazole: step 1/1. In terms of biological role, catalyzes the phosphorylation of the hydroxyl group of 4-methyl-5-beta-hydroxyethylthiazole (THZ). The polypeptide is Hydroxyethylthiazole kinase (Methanocorpusculum labreanum (strain ATCC 43576 / DSM 4855 / Z)).